Here is a 475-residue protein sequence, read N- to C-terminus: Protein ABCI7, chloroplastic (475 aa).

Residues 1-36 constitute a chloroplast transit peptide; that stretch reads MAAATVLGRLSLIPNLSSKPKLKSNRRTTSTSVSVR.

In terms of assembly, interacts with NAP7.

The protein resides in the plastid. The protein localises to the chloroplast. This Arabidopsis thaliana (Mouse-ear cress) protein is Protein ABCI7, chloroplastic (ABCI7).